The sequence spans 367 residues: Phosphoglycerate kinase (367 aa).

Residues valine 1, aspartate 2, phenylalanine 3, asparagine 4, arginine 17, serine 40, histidine 41, glycine 43, arginine 44, leucine 98, arginine 99, histidine 146, and arginine 147 each contribute to the (2R)-3-phosphoglycerate site. Glycine 190 lines the ADP pocket. Glycine 190 contacts CDP. The AMP site is built by alanine 191 and lysine 192. Position 191 (alanine 191) interacts with ATP. Alanine 191 is a binding site for Mg(2+). Mg(2+) is bound by residues alanine 194 and aspartate 195. Aspartate 195 is a binding site for CDP. Lysine 196 contacts AMP. An ATP-binding site is contributed by lysine 196. Glycine 214 contributes to the ADP binding site. Position 214 (glycine 214) interacts with CDP. The AMP site is built by glycine 215 and glycine 289. The ATP site is built by glycine 215 and glycine 289. CDP is bound by residues glycine 314 and phenylalanine 319. Residue phenylalanine 319 coordinates ADP. Glutamate 320 contacts AMP. Residues glutamate 320, aspartate 351, and threonine 352 each contribute to the ATP site. Aspartate 351 contributes to the Mg(2+) binding site.

The protein belongs to the phosphoglycerate kinase family. As to quaternary structure, monomer. Mg(2+) is required as a cofactor.

The enzyme catalyses (2R)-3-phosphoglycerate + ATP = (2R)-3-phospho-glyceroyl phosphate + ADP. It functions in the pathway carbohydrate degradation; glycolysis; pyruvate from D-glyceraldehyde 3-phosphate: step 2/5. The protein is Phosphoglycerate kinase (PGK) of Paramecium primaurelia.